We begin with the raw amino-acid sequence, 380 residues long: Erythronate-4-phosphate dehydrogenase (380 aa).

2 residues coordinate substrate: Ser-45 and Thr-66. Residues 126-127 (QV), Asp-146, Thr-175, 206-208 (ASR), and Asp-232 each bind NAD(+). Arg-208 is a catalytic residue. Residue Glu-237 is part of the active site. The active-site Proton donor is the His-254. Gly-257 contacts NAD(+). Tyr-258 lines the substrate pocket.

This sequence belongs to the D-isomer specific 2-hydroxyacid dehydrogenase family. PdxB subfamily. In terms of assembly, homodimer.

Its subcellular location is the cytoplasm. It carries out the reaction 4-phospho-D-erythronate + NAD(+) = (R)-3-hydroxy-2-oxo-4-phosphooxybutanoate + NADH + H(+). It functions in the pathway cofactor biosynthesis; pyridoxine 5'-phosphate biosynthesis; pyridoxine 5'-phosphate from D-erythrose 4-phosphate: step 2/5. Its function is as follows. Catalyzes the oxidation of erythronate-4-phosphate to 3-hydroxy-2-oxo-4-phosphonooxybutanoate. In Pseudomonas paraeruginosa (strain DSM 24068 / PA7) (Pseudomonas aeruginosa (strain PA7)), this protein is Erythronate-4-phosphate dehydrogenase.